The primary structure comprises 276 residues: NH(3)-dependent NAD(+) synthetase (276 aa).

43–50 (GISGGVDS) is an ATP binding site. A Mg(2+)-binding site is contributed by Asp-49. Arg-146 is a binding site for deamido-NAD(+). Thr-166 contacts ATP. Glu-171 contacts Mg(2+). 2 residues coordinate deamido-NAD(+): Lys-179 and Asp-186. 2 residues coordinate ATP: Lys-195 and Thr-217. Position 266-267 (266-267 (HK)) interacts with deamido-NAD(+).

It belongs to the NAD synthetase family. Homodimer.

It carries out the reaction deamido-NAD(+) + NH4(+) + ATP = AMP + diphosphate + NAD(+) + H(+). Its pathway is cofactor biosynthesis; NAD(+) biosynthesis; NAD(+) from deamido-NAD(+) (ammonia route): step 1/1. Catalyzes the ATP-dependent amidation of deamido-NAD to form NAD. Uses ammonia as a nitrogen source. The chain is NH(3)-dependent NAD(+) synthetase from Vibrio atlanticus (strain LGP32) (Vibrio splendidus (strain Mel32)).